We begin with the raw amino-acid sequence, 326 residues long: Tagatose 1,6-diphosphate aldolase (326 aa).

It belongs to the aldolase LacD family.

It catalyses the reaction D-tagatofuranose 1,6-bisphosphate = D-glyceraldehyde 3-phosphate + dihydroxyacetone phosphate. The protein operates within carbohydrate metabolism; D-tagatose 6-phosphate degradation; D-glyceraldehyde 3-phosphate and glycerone phosphate from D-tagatose 6-phosphate: step 2/2. This chain is Tagatose 1,6-diphosphate aldolase, found in Staphylococcus aureus (strain MSSA476).